The sequence spans 283 residues: MRGIWFSELQTPDLAISVRLNQTLHHEKTPYQELAVVDTEAYGRMLLLDNIIQTTVKDEFFYHEMIAHVPLNTHPNPRTALVIGGGDGGVVREIVKHPSIEKVTLVEIDARVVANAREYLPEIACGLDDARVEIRFEDGIEHVRQRENTYDVIIVDSTDPIGPAVGLFSAEFYRNVYRALKADGVFVAQTESPIFNSRLIRRIQRDLKEIFPIARLYLTTVPTYPGGLWAFSLGSKKYDPLEVDWRQAPKVATRYYTPAIHQAAFSLPPFVQEFLEAPEEEEF.

One can recognise a PABS domain in the interval 3-236 (GIWFSELQTP…GLWAFSLGSK (234 aa)). Residue Q32 participates in S-methyl-5'-thioadenosine binding. Spermidine contacts are provided by H63 and D87. Residues E107 and 138–139 (DG) contribute to the S-methyl-5'-thioadenosine site. D156 acts as the Proton acceptor in catalysis. 156–159 (DSTD) provides a ligand contact to spermidine. P163 contributes to the S-methyl-5'-thioadenosine binding site.

Belongs to the spermidine/spermine synthase family. In terms of assembly, homodimer or homotetramer.

The protein resides in the cytoplasm. The enzyme catalyses S-adenosyl 3-(methylsulfanyl)propylamine + putrescine = S-methyl-5'-thioadenosine + spermidine + H(+). It functions in the pathway amine and polyamine biosynthesis; spermidine biosynthesis; spermidine from putrescine: step 1/1. Catalyzes the irreversible transfer of a propylamine group from the amino donor S-adenosylmethioninamine (decarboxy-AdoMet) to putrescine (1,4-diaminobutane) to yield spermidine. This chain is Polyamine aminopropyltransferase, found in Moorella thermoacetica (strain ATCC 39073 / JCM 9320).